A 149-amino-acid polypeptide reads, in one-letter code: 17 kDa major membrane protein (149 aa).

The signal sequence occupies residues M1–S19. Residue C20 is the site of N-palmitoyl cysteine attachment. C20 is lipidated: S-diacylglycerol cysteine.

Its subcellular location is the cell outer membrane. This Francisella tularensis subsp. holarctica (strain LVS) protein is 17 kDa major membrane protein.